The following is a 60-amino-acid chain: Ixodegrin YY-39 (60 aa).

The first 21 residues, 1–21, serve as a signal peptide directing secretion; it reads MNAALIAALLILGALTLDATA. The Cell attachment site motif lies at 49–51; that stretch reads RGD.

This sequence belongs to the ixodegrin family. Contains 3 disulfide bonds. Expressed in salivary glands.

It is found in the secreted. Functionally, tick salivary platelet aggregation inhibitor that plays an important part in the anti-hemostatic strategy of ticks. Inhibits platelet aggregation induced by ADP, thrombin and thromboxane A2 (TXA2). Blocks platelet adhesion to soluble collagen (most probably through the binding to alpha-2/beta-1 integrin (ITGA2/ITGB1)) and binds to purified glycoprotein IIb/IIIa (ITGA2B/ITGB3) in a dose-dependent manner. In vivo, reduces thrombus weight effectively in a rat arteriovenous shunt model and inhibits thrombosis in a carrageenan-induced mouse tail thrombosis model. The sequence is that of Ixodegrin YY-39 from Ixodes scapularis (Black-legged tick).